The primary structure comprises 100 residues: Aspartyl/glutamyl-tRNA(Asn/Gln) amidotransferase subunit C (100 aa).

This sequence belongs to the GatC family. In terms of assembly, heterotrimer of A, B and C subunits.

It carries out the reaction L-glutamyl-tRNA(Gln) + L-glutamine + ATP + H2O = L-glutaminyl-tRNA(Gln) + L-glutamate + ADP + phosphate + H(+). The catalysed reaction is L-aspartyl-tRNA(Asn) + L-glutamine + ATP + H2O = L-asparaginyl-tRNA(Asn) + L-glutamate + ADP + phosphate + 2 H(+). Functionally, allows the formation of correctly charged Asn-tRNA(Asn) or Gln-tRNA(Gln) through the transamidation of misacylated Asp-tRNA(Asn) or Glu-tRNA(Gln) in organisms which lack either or both of asparaginyl-tRNA or glutaminyl-tRNA synthetases. The reaction takes place in the presence of glutamine and ATP through an activated phospho-Asp-tRNA(Asn) or phospho-Glu-tRNA(Gln). The sequence is that of Aspartyl/glutamyl-tRNA(Asn/Gln) amidotransferase subunit C from Janthinobacterium sp. (strain Marseille) (Minibacterium massiliensis).